Reading from the N-terminus, the 315-residue chain is Methylglutaconyl-CoA hydratase, mitochondrial (315 aa).

A mitochondrion-targeting transit peptide spans 1-43 (MAAAAAPGALGALSAGRVRLVAACCARLGSAAWARGTAPRRGY). Lys76 is subject to N6-acetyllysine; alternate. Lys76 bears the N6-succinyllysine; alternate mark. The segment at 81–95 (KNLLKMLSKAVDALK) is RNA-binding. N6-succinyllysine is present on Lys85. 2 positions are modified to N6-acetyllysine; alternate: Lys89 and Lys120. Residues Lys89 and Lys120 each carry the N6-succinyllysine; alternate modification. 2 positions are modified to N6-succinyllysine: Lys124 and Lys136. An N6-acetyllysine; alternate mark is found at Lys180 and Lys187. Residues Lys180 and Lys187 each carry the N6-succinyllysine; alternate modification. Lys305 bears the N6-succinyllysine mark.

It belongs to the enoyl-CoA hydratase/isomerase family. As to quaternary structure, homohexamer.

The protein resides in the mitochondrion. It carries out the reaction (3S)-3-hydroxy-3-methylglutaryl-CoA = 3-methyl-(2E)-glutaconyl-CoA + H2O. It catalyses the reaction (3S)-citramalyl-CoA = itaconyl-CoA + H2O. The catalysed reaction is 3-hydroxyisovaleryl-CoA = 3-methylbut-2-enoyl-CoA + H2O. The enzyme catalyses (S)-3-hydroxyglutaryl-CoA = (2E)-glutaconyl-CoA + H2O. It participates in amino-acid degradation; L-leucine degradation; (S)-3-hydroxy-3-methylglutaryl-CoA from 3-isovaleryl-CoA: step 3/3. In terms of biological role, catalyzes the fifth step in the leucine degradation pathway, the reversible hydration of 3-methylglutaconyl-CoA (3-MG-CoA) to 3-hydroxy-3-methylglutaryl-CoA (HMG-CoA). Can catalyze the reverse reaction but at a much lower rate in vitro. HMG-CoA is then quickly degraded by another enzyme (such as HMG-CoA lyase) to give acetyl-CoA and acetoacetate. Uses other substrates such as (2E)-glutaconyl-CoA efficiently in vitro, and to a lesser extent 3-methylcrotonyl-CoA (3-methyl-(2E)-butenoyl-CoA), crotonyl-CoA ((2E)-butenoyl-CoA) and 3-hydroxybutanoyl-CoA (the missing carboxylate reduces affinity to the active site). Originally it was identified as an RNA-binding protein as it binds to AU-rich elements (AREs) in vitro. AREs direct rapid RNA degradation and mRNA deadenylation. Might have itaconyl-CoA hydratase activity, converting itaconyl-CoA into citramalyl-CoA in the C5-dicarboxylate catabolism pathway. The C5-dicarboxylate catabolism pathway is required to detoxify itaconate, an antimicrobial metabolite and immunomodulator produced by macrophages during certain infections, that can act as a vitamin B12-poisoning metabolite. The polypeptide is Methylglutaconyl-CoA hydratase, mitochondrial (Rattus norvegicus (Rat)).